Consider the following 445-residue polypeptide: Tubulin beta-4 chain (445 aa).

GTP contacts are provided by Q11, E69, S138, G142, T143, G144, N204, and N226. Position 69 (E69) interacts with Mg(2+). A disordered region spans residues E421–E445. The segment covering T429–E445 has biased composition (acidic residues).

Belongs to the tubulin family. In terms of assembly, dimer of alpha and beta chains. A typical microtubule is a hollow water-filled tube with an outer diameter of 25 nm and an inner diameter of 15 nM. Alpha-beta heterodimers associate head-to-tail to form protofilaments running lengthwise along the microtubule wall with the beta-tubulin subunit facing the microtubule plus end conferring a structural polarity. Microtubules usually have 13 protofilaments but different protofilament numbers can be found in some organisms and specialized cells. Mg(2+) serves as cofactor.

Its subcellular location is the cytoplasm. The protein localises to the cytoskeleton. In terms of biological role, tubulin is the major constituent of microtubules, a cylinder consisting of laterally associated linear protofilaments composed of alpha- and beta-tubulin heterodimers. Microtubules grow by the addition of GTP-tubulin dimers to the microtubule end, where a stabilizing cap forms. Below the cap, tubulin dimers are in GDP-bound state, owing to GTPase activity of alpha-tubulin. The chain is Tubulin beta-4 chain (TUBB4) from Triticum aestivum (Wheat).